The sequence spans 141 residues: Hemoglobin subunit alpha (141 aa).

In terms of domain architecture, Globin spans 1-141 (VLSPADKTNI…VSTVLTSKYR (141 aa)). A Phosphoserine modification is found at S3. K7 is subject to N6-succinyllysine. The residue at position 8 (T8) is a Phosphothreonine. N6-succinyllysine is present on K11. N6-acetyllysine; alternate is present on K16. K16 bears the N6-succinyllysine; alternate mark. Y24 is subject to Phosphotyrosine. S35 bears the Phosphoserine mark. N6-succinyllysine is present on K40. Residue S49 is modified to Phosphoserine. Residue H58 participates in O2 binding. H87 lines the heme b pocket. S102 carries the phosphoserine modification. T108 is subject to Phosphothreonine. At S124 the chain carries Phosphoserine. Phosphothreonine occurs at positions 134 and 137. Position 138 is a phosphoserine (S138).

It belongs to the globin family. Heterotetramer of two alpha chains and two beta chains. Red blood cells.

In terms of biological role, involved in oxygen transport from the lung to the various peripheral tissues. Functionally, hemopressin acts as an antagonist peptide of the cannabinoid receptor CNR1. Hemopressin-binding efficiently blocks cannabinoid receptor CNR1 and subsequent signaling. In Vulpes vulpes (Red fox), this protein is Hemoglobin subunit alpha (HBA).